The primary structure comprises 223 residues: uncharacterized protein (223 aa).

A disordered region spans residues 117 to 148; the sequence is THAHTHAHTHGHTHTRAHSTHAHTHAHSHYHT.

This is an uncharacterized protein from Homo sapiens (Human).